We begin with the raw amino-acid sequence, 452 residues long: Cobyrinate a,c-diamide synthase (452 aa).

Residues 248–441 enclose the GATase cobBQ-type domain; the sequence is RVAYALDAAF…LHIHFYQNPA (194 aa). The active-site Nucleophile is Cys-330.

This sequence belongs to the CobB/CbiA family. Requires Mg(2+) as cofactor.

It carries out the reaction cob(II)yrinate + 2 L-glutamine + 2 ATP + 2 H2O = cob(II)yrinate a,c diamide + 2 L-glutamate + 2 ADP + 2 phosphate + 2 H(+). The protein operates within cofactor biosynthesis; adenosylcobalamin biosynthesis; cob(II)yrinate a,c-diamide from sirohydrochlorin (anaerobic route): step 10/10. In terms of biological role, catalyzes the ATP-dependent amidation of the two carboxylate groups at positions a and c of cobyrinate, using either L-glutamine or ammonia as the nitrogen source. The protein is Cobyrinate a,c-diamide synthase of Listeria innocua serovar 6a (strain ATCC BAA-680 / CLIP 11262).